The sequence spans 322 residues: Formimidoylglutamase (322 aa).

Residues H130, D156, H158, D160, C245, and D247 each contribute to the Mn(2+) site.

Belongs to the arginase family. It depends on Mn(2+) as a cofactor.

It carries out the reaction N-formimidoyl-L-glutamate + H2O = formamide + L-glutamate. It functions in the pathway amino-acid degradation; L-histidine degradation into L-glutamate; L-glutamate from N-formimidoyl-L-glutamate (hydrolase route): step 1/1. Functionally, catalyzes the conversion of N-formimidoyl-L-glutamate to L-glutamate and formamide. The chain is Formimidoylglutamase from Lysinibacillus sphaericus (strain C3-41).